Consider the following 209-residue polypeptide: MRKKPIIIGVTGGSGSGKTSVSRAILANFPNAKIAMIEHDSYYKDQSHLTFEERVTTNYDHPLAFETDLLINHLKELIADRPVDIPIYDYTQHTRSEKSYRQEPQDVFIVEGILVLEDQRLRDLMDIKLFVDTDDDIRIIRRIKRDMQERGRSLDSIIEQYTRVVKPMYHQFIEPTKRYADIVVPEGVSNLVAIDLINTKVASILNETH.

Position 12 to 19 (12 to 19 (GGSGSGKT)) interacts with ATP.

It belongs to the uridine kinase family.

The protein resides in the cytoplasm. The enzyme catalyses uridine + ATP = UMP + ADP + H(+). It carries out the reaction cytidine + ATP = CMP + ADP + H(+). It participates in pyrimidine metabolism; CTP biosynthesis via salvage pathway; CTP from cytidine: step 1/3. Its pathway is pyrimidine metabolism; UMP biosynthesis via salvage pathway; UMP from uridine: step 1/1. This chain is Uridine kinase, found in Streptococcus mutans serotype c (strain ATCC 700610 / UA159).